Here is a 62-residue protein sequence, read N- to C-terminus: Protein YhjR (62 aa).

The chain is Protein YhjR (yhjR) from Escherichia coli (strain K12).